We begin with the raw amino-acid sequence, 461 residues long: Bifunctional protein HldE (461 aa).

A ribokinase region spans residues 1 to 312 (MLEFLSQQKP…IRSFKSMSFE (312 aa)). 191–194 (NKKE) contributes to the ATP binding site. Asp259 is a catalytic residue. The cytidylyltransferase stretch occupies residues 334–461 (FTNGCFDIVH…KIIEKIKDKK (128 aa)).

This sequence in the N-terminal section; belongs to the carbohydrate kinase PfkB family. In the C-terminal section; belongs to the cytidylyltransferase family. In terms of assembly, homodimer.

The enzyme catalyses D-glycero-beta-D-manno-heptose 7-phosphate + ATP = D-glycero-beta-D-manno-heptose 1,7-bisphosphate + ADP + H(+). It carries out the reaction D-glycero-beta-D-manno-heptose 1-phosphate + ATP + H(+) = ADP-D-glycero-beta-D-manno-heptose + diphosphate. It functions in the pathway nucleotide-sugar biosynthesis; ADP-L-glycero-beta-D-manno-heptose biosynthesis; ADP-L-glycero-beta-D-manno-heptose from D-glycero-beta-D-manno-heptose 7-phosphate: step 1/4. The protein operates within nucleotide-sugar biosynthesis; ADP-L-glycero-beta-D-manno-heptose biosynthesis; ADP-L-glycero-beta-D-manno-heptose from D-glycero-beta-D-manno-heptose 7-phosphate: step 3/4. Functionally, catalyzes the phosphorylation of D-glycero-D-manno-heptose 7-phosphate at the C-1 position to selectively form D-glycero-beta-D-manno-heptose-1,7-bisphosphate. Its function is as follows. Catalyzes the ADP transfer from ATP to D-glycero-beta-D-manno-heptose 1-phosphate, yielding ADP-D-glycero-beta-D-manno-heptose. This chain is Bifunctional protein HldE, found in Campylobacter jejuni (strain RM1221).